The chain runs to 386 residues: Formate-dependent phosphoribosylglycinamide formyltransferase (386 aa).

Residues 15-16 (EL) and Glu-75 contribute to the N(1)-(5-phospho-beta-D-ribosyl)glycinamide site. Residues Arg-107, Lys-148, 153-158 (SSGKGQ), 188-191 (EQFI), and Glu-196 contribute to the ATP site. One can recognise an ATP-grasp domain in the interval 112–301 (ALAAQQLNLQ…EFELHLRAIV (190 aa)). Residues Glu-260 and Glu-272 each coordinate Mg(2+). Residues Asp-279, Lys-349, and 356–357 (RR) each bind N(1)-(5-phospho-beta-D-ribosyl)glycinamide.

It belongs to the PurK/PurT family. As to quaternary structure, homodimer.

It carries out the reaction N(1)-(5-phospho-beta-D-ribosyl)glycinamide + formate + ATP = N(2)-formyl-N(1)-(5-phospho-beta-D-ribosyl)glycinamide + ADP + phosphate + H(+). It participates in purine metabolism; IMP biosynthesis via de novo pathway; N(2)-formyl-N(1)-(5-phospho-D-ribosyl)glycinamide from N(1)-(5-phospho-D-ribosyl)glycinamide (formate route): step 1/1. Involved in the de novo purine biosynthesis. Catalyzes the transfer of formate to 5-phospho-ribosyl-glycinamide (GAR), producing 5-phospho-ribosyl-N-formylglycinamide (FGAR). Formate is provided by PurU via hydrolysis of 10-formyl-tetrahydrofolate. In Francisella tularensis subsp. tularensis (strain SCHU S4 / Schu 4), this protein is Formate-dependent phosphoribosylglycinamide formyltransferase.